Here is a 364-residue protein sequence, read N- to C-terminus: Aminomethyltransferase (364 aa).

Belongs to the GcvT family. As to quaternary structure, the glycine cleavage system is composed of four proteins: P, T, L and H.

It catalyses the reaction N(6)-[(R)-S(8)-aminomethyldihydrolipoyl]-L-lysyl-[protein] + (6S)-5,6,7,8-tetrahydrofolate = N(6)-[(R)-dihydrolipoyl]-L-lysyl-[protein] + (6R)-5,10-methylene-5,6,7,8-tetrahydrofolate + NH4(+). Its function is as follows. The glycine cleavage system catalyzes the degradation of glycine. The sequence is that of Aminomethyltransferase from Salmonella arizonae (strain ATCC BAA-731 / CDC346-86 / RSK2980).